The chain runs to 284 residues: Flavin-dependent thymidylate synthase (284 aa).

In terms of domain architecture, ThyX spans 27–237 (GFIRVVDYMG…PLAYNAFVEY (211 aa)). Residues threonine 73, 96-98 (RHR), and glutamate 104 each bind FAD. DUMP-binding positions include 93–96 (QWIR) and 104–108 (EYSAR). A ThyX motif motif is present at residues 96-106 (RHRTANVNEYS). Residues 122–142 (EQVAKQSDNNKQGSGEAFDPD) are disordered. Polar residues predominate over residues 125 to 134 (AKQSDNNKQG). Arginine 176 provides a ligand contact to dUMP. FAD contacts are provided by residues 192 to 194 (DLH) and histidine 198. Arginine 203 is a dUMP binding site. Arginine 203 (involved in ionization of N3 of dUMP, leading to its activation) is an active-site residue.

This sequence belongs to the thymidylate synthase ThyX family. As to quaternary structure, homotetramer. The cofactor is FAD.

It catalyses the reaction dUMP + (6R)-5,10-methylene-5,6,7,8-tetrahydrofolate + NADPH + H(+) = dTMP + (6S)-5,6,7,8-tetrahydrofolate + NADP(+). Its pathway is pyrimidine metabolism; dTTP biosynthesis. Functionally, catalyzes the reductive methylation of 2'-deoxyuridine-5'-monophosphate (dUMP) to 2'-deoxythymidine-5'-monophosphate (dTMP) while utilizing 5,10-methylenetetrahydrofolate (mTHF) as the methyl donor, and NADPH and FADH(2) as the reductant. In Wolbachia pipientis wMel, this protein is Flavin-dependent thymidylate synthase.